Reading from the N-terminus, the 137-residue chain is Protein MGF 110-7L (137 aa).

Residues M1–S20 form the signal peptide. N-linked (GlcNAc...) asparagine; by host glycans are attached at residues N69, N70, and N105.

The protein belongs to the asfaviruses V110 family.

This Ornithodoros (relapsing fever ticks) protein is Protein MGF 110-7L.